Here is a 693-residue protein sequence, read N- to C-terminus: Alpha-glucosidase (693 aa).

Catalysis depends on residues Asp320 and Glu323. The Proton donor role is filled by Asp416.

This sequence belongs to the glycosyl hydrolase 31 family.

It is found in the cytoplasm. It carries out the reaction Hydrolysis of terminal, non-reducing (1-&gt;4)-linked alpha-D-glucose residues with release of alpha-D-glucose.. In terms of biological role, major soluble alpha-glucosidase. This is Alpha-glucosidase (malA) from Saccharolobus solfataricus (strain ATCC 35092 / DSM 1617 / JCM 11322 / P2) (Sulfolobus solfataricus).